The primary structure comprises 238 residues: Demethylmenaquinone methyltransferase (238 aa).

S-adenosyl-L-methionine-binding positions include threonine 65, aspartate 85, and 109 to 110; that span reads DA.

Belongs to the class I-like SAM-binding methyltransferase superfamily. MenG/UbiE family.

It carries out the reaction a 2-demethylmenaquinol + S-adenosyl-L-methionine = a menaquinol + S-adenosyl-L-homocysteine + H(+). It functions in the pathway quinol/quinone metabolism; menaquinone biosynthesis; menaquinol from 1,4-dihydroxy-2-naphthoate: step 2/2. In terms of biological role, methyltransferase required for the conversion of demethylmenaquinol (DMKH2) to menaquinol (MKH2). This chain is Demethylmenaquinone methyltransferase, found in Roseiflexus castenholzii (strain DSM 13941 / HLO8).